The chain runs to 259 residues: Protein GrpE (259 aa).

Disordered regions lie at residues 1–74 (MNSD…IKGS) and 228–259 (PGPKVINEEIPDQSASNQELSESVDGSTKDEN). The span at 17-40 (SSQNNPSENSVSSPNSNESVNQVE) shows a compositional bias: low complexity. Polar residues-rich tracts occupy residues 56 to 73 (VDTANEQSSTSCESNIKG) and 240 to 253 (QSASNQELSESVDG).

The protein belongs to the GrpE family. In terms of assembly, homodimer.

The protein localises to the cytoplasm. Functionally, participates actively in the response to hyperosmotic and heat shock by preventing the aggregation of stress-denatured proteins, in association with DnaK and GrpE. It is the nucleotide exchange factor for DnaK and may function as a thermosensor. Unfolded proteins bind initially to DnaJ; upon interaction with the DnaJ-bound protein, DnaK hydrolyzes its bound ATP, resulting in the formation of a stable complex. GrpE releases ADP from DnaK; ATP binding to DnaK triggers the release of the substrate protein, thus completing the reaction cycle. Several rounds of ATP-dependent interactions between DnaJ, DnaK and GrpE are required for fully efficient folding. This chain is Protein GrpE, found in Prochlorococcus marinus (strain NATL2A).